A 277-amino-acid polypeptide reads, in one-letter code: Methyltransferase str3 (277 aa).

It belongs to the methyltransferase superfamily. LaeA methyltransferase family.

It participates in mycotoxin biosynthesis. Methyltransferase; part of the gene cluster that mediates the biosynthesis of strobilurin A, an antifungal polyketide that contains a key beta-methoxyacrylate toxophore that targets the complex III of the mitochondrial electron transport chain. Strobilurin biosynthesis begins with construction of benzoyl CoA by step-wise elimination of ammonia from phenylalanine by the phenylalanine ammonia-lyase str11, oxygenation by str8 and retro-Claisen reaction to form benzoic acid, which is activated to its CoA thiolester benzoyl CoA by the dedicated CoA ligase str10. Benzoyl CoA forms the starter unit for the highly reducing polyketide synthase stpks1 that produces the polyketide prestrobilutin A. The FAD-dependent oxygenase str9 then catalyzes the key oxidative rearrangement responsible for the creation of the beta-methoxyacrylate toxophore. Str9 performs epoxidation of the 2,3 olefin of prestrobilutin A, followed by Meinwald rearrangement to furnish the aldehyde intermediate. Rapid enolization of the aldehyde intermediate would give the beta-methoxyacrylate skeleton and methylations catalyzed by str2 and str3 complete the synthesis and lead to the production of strobilurin A. The short-chain dehydrogenase stl2 and the dehydrogenase str4 play a role in the shunt pathway leading to the production of bolineol. The cluster encodes no obvious halogenase gene that could be involved in production of strobilurin B, nor any obvious dimethylallyl-transferase that could be involved in the production of strobilurin G. It is possible that unknown proteins encoded in, or near, the cluster (such as str1 or stl1) may form new classes of halogenases or dimethylally-transferases, or that the responsible genes are located elsewhere on the genome. Similarly, proteins encoded by str5/str6 hydrolases appear to have no chemical role in the biosynthesis of strobilurin A. Finally, no obvious self-resistance gene is found within the cluster. The chain is Methyltransferase str3 from Strobilurus tenacellus.